We begin with the raw amino-acid sequence, 307 residues long: Nicotinamide/nicotinic acid mononucleotide adenylyltransferase 2 (307 aa).

Residues Ser16 and Phe17 each contribute to the NAD(+) site. His24 serves as a coordination point for ATP. NAD(+) is bound by residues Trp92 and Thr95. 2 S-palmitoyl cysteine lipidation sites follow: Cys164 and Cys165. NAD(+)-binding residues include Gly200, Asp202, Leu212, Trp213, and Arg232. 271 to 274 (TKSR) lines the ATP pocket.

It belongs to the eukaryotic NMN adenylyltransferase family. As to quaternary structure, monomer. Requires Mg(2+) as cofactor. In terms of processing, degraded in response to injured neurite. Degradation is caused by polyubiquitination by MYCBP2 after recognition by FBXO45. Palmitoylated; palmitoylation is required for membrane association.

The protein resides in the golgi apparatus membrane. The protein localises to the cytoplasmic vesicle membrane. Its subcellular location is the cytoplasm. It localises to the cell projection. It is found in the axon. It carries out the reaction beta-nicotinamide D-ribonucleotide + ATP + H(+) = diphosphate + NAD(+). The enzyme catalyses nicotinate beta-D-ribonucleotide + ATP + H(+) = deamido-NAD(+) + diphosphate. It participates in cofactor biosynthesis; NAD(+) biosynthesis; NAD(+) from nicotinamide D-ribonucleotide: step 1/1. The protein operates within cofactor biosynthesis; NAD(+) biosynthesis; deamido-NAD(+) from nicotinate D-ribonucleotide: step 1/1. With respect to regulation, inhibited by P1-(adenosine-5')-P3-(nicotinamide-riboside-5')-triphosphate (Np3AD) and P1-(adenosine-5')-P4-(nicotinamide-riboside-5')-tetraphosphate (Np4AD). Its function is as follows. Nicotinamide/nicotinate-nucleotide adenylyltransferase that acts as an axon maintenance factor. Axon survival factor required for the maintenance of healthy axons: acts by delaying Wallerian axon degeneration, an evolutionarily conserved process that drives the loss of damaged axons. Catalyzes the formation of NAD(+) from nicotinamide mononucleotide (NMN) and ATP. Can also use the deamidated form; nicotinic acid mononucleotide (NaMN) as substrate but with a lower efficiency. Cannot use triazofurin monophosphate (TrMP) as substrate. Also catalyzes the reverse reaction, i.e. the pyrophosphorolytic cleavage of NAD(+). For the pyrophosphorolytic activity prefers NAD(+), NADH and NaAD as substrates and degrades nicotinic acid adenine dinucleotide phosphate (NHD) less effectively. Fails to cleave phosphorylated dinucleotides NADP(+), NADPH and NaADP(+). Also acts as an activator of ADP-ribosylation by supporting the catalytic activity of PARP16 and promoting mono-ADP-ribosylation of ribosomes by PARP16. May be involved in the maintenance of axonal integrity. The protein is Nicotinamide/nicotinic acid mononucleotide adenylyltransferase 2 (Nmnat2) of Rattus norvegicus (Rat).